A 106-amino-acid polypeptide reads, in one-letter code: Flagellar transcriptional regulator FlhD (106 aa).

Belongs to the FlhD family. Homodimer; disulfide-linked. Forms a heterohexamer composed of two FlhC and four FlhD subunits. Each FlhC binds a FlhD dimer, forming a heterotrimer, and a hexamer assembles by dimerization of two heterotrimers.

The protein localises to the cytoplasm. Its function is as follows. Functions in complex with FlhC as a master transcriptional regulator that regulates transcription of several flagellar and non-flagellar operons by binding to their promoter region. Activates expression of class 2 flagellar genes, including fliA, which is a flagellum-specific sigma factor that turns on the class 3 genes. Also regulates genes whose products function in a variety of physiological pathways. This is Flagellar transcriptional regulator FlhD from Burkholderia pseudomallei (strain 1710b).